Here is a 507-residue protein sequence, read N- to C-terminus: MPDNAQKYVAAIDQGTTSSRCIIFDHGGAIVAVDQREHRQIFPKPGWVEHDATEIWSKVQAVVAGAIAKAGLRADQLSALGITNQRETTVLWDRATGKPVHNAIVWQDTRTSALCHELGGSDGQDRFREQTGLPLASYFSGPKAAWLLDNVPGLRARAERGEIAFGTIDSWLIWNLTGGTDGGRHVTDVTNAGRTMLMNLETLQWDRSILSAMNVPEAVLPEIRSSSEVYGTAVGQLSGVPVASALGDQQAAVFGQACYDVGTAKNTYGTGSFLLLNTGNRPVPSKNGLLTTMGYKIGGEAPVYCLEGSIAITGALVQWFRDQLGIIRTADEIETLAASVDDNGGAYIVPAFSGLFAPYWRSDARGVVTGLTRYVTKAHLARAVLEATSWQTREVVDAMYQDSGVRITTLKVDGGMTKNNLLMQHQADVLGVPVIRPRVSETTCLGAAYAAGLATGVWNDLDELKSHWQKDVEWTPSMEASERDREYHNWRKAVEKSFGWHEEDGVN.

Threonine 16 is a binding site for ADP. Threonine 16, threonine 17, and serine 18 together coordinate ATP. Sn-glycerol 3-phosphate is bound at residue threonine 16. Arginine 20 provides a ligand contact to ADP. Sn-glycerol 3-phosphate is bound by residues arginine 86, glutamate 87, tyrosine 138, and aspartate 248. Arginine 86, glutamate 87, tyrosine 138, aspartate 248, and glutamine 249 together coordinate glycerol. The ADP site is built by threonine 270 and glycine 314. ATP contacts are provided by threonine 270, glycine 314, glutamine 318, and glycine 415. Glycine 415 and asparagine 419 together coordinate ADP.

The protein belongs to the FGGY kinase family.

It catalyses the reaction glycerol + ATP = sn-glycerol 3-phosphate + ADP + H(+). Its pathway is polyol metabolism; glycerol degradation via glycerol kinase pathway; sn-glycerol 3-phosphate from glycerol: step 1/1. Its activity is regulated as follows. Inhibited by fructose 1,6-bisphosphate (FBP). In terms of biological role, key enzyme in the regulation of glycerol uptake and metabolism. Catalyzes the phosphorylation of glycerol to yield sn-glycerol 3-phosphate. This chain is Glycerol kinase 2, found in Streptomyces avermitilis (strain ATCC 31267 / DSM 46492 / JCM 5070 / NBRC 14893 / NCIMB 12804 / NRRL 8165 / MA-4680).